A 1527-amino-acid chain; its full sequence is Rho guanine nucleotide exchange factor 11 (1527 aa).

Positions 1 to 56 (MSIRLPHSIDRSASKKQSHLSSPIASWLSSLSSLGDSTPERTSPSHHRQPSDTSET) are disordered. Phosphoserine is present on residues Ser2, Ser30, Ser32, and Ser51. Over residues 19–37 (HLSSPIASWLSSLSSLGDS) the composition is skewed to low complexity. Residues 64 to 143 (CVIIQKDQHG…LTLLGSSPPS (80 aa)) form the PDZ domain. Positions 216 to 247 (PCGETSQRTCEGRLSVDSQEADSGLDSGTERF) are disordered. Residues Ser262 and Ser268 each carry the phosphoserine modification. Thr271 carries the phosphothreonine modification. Residues Ser272 and Ser288 each carry the phosphoserine modification. The region spanning 323–503 (ESDIIFQDLE…NTFMSHAGIR (181 aa)) is the RGSL domain. A coiled-coil region spans residues 461–487 (LRERQMAEKQLAALGDILSKYEEDRSA). Disordered regions lie at residues 506–569 (ESRS…QSIK) and 582–687 (NSHQ…GRRS). Over residues 509-519 (SSCTAEKTQSA) the composition is skewed to polar residues. 2 stretches are compositionally biased toward basic and acidic residues: residues 539–551 (SKKEKDALEDKKR) and 624–645 (KGREEMKRSRKAENVPRPRSDV). Residues Ser643 and Ser671 each carry the phosphoserine modification. The span at 656 to 672 (LHQSASSSASSLSTRSL) shows a compositional bias: low complexity. Phosphothreonine occurs at positions 676 and 680. The region spanning 742-931 (DRQEVINELF…REILKFVNEA (190 aa)) is the DH domain. Positions 973–1087 (KMIHEGPLTW…WMELLEEAVQ (115 aa)) constitute a PH domain. Disordered stretches follow at residues 1090–1184 (TKHP…NRGI), 1231–1321 (QAAG…TEPA), and 1379–1411 (AGPLDSSTEPTGTPPSPSQCHSLPAWPTEPQPY). The span at 1126-1138 (EVYHTEKEPKKLP) shows a compositional bias: basic and acidic residues. Positions 1242 to 1251 (PTPSVVSITS) are enriched in polar residues. Phosphoserine is present on residues Ser1299 and Ser1304. Low complexity predominate over residues 1312-1321 (AAEAASTEPA). Phosphoserine occurs at positions 1462 and 1463. Thr1467 and Thr1480 each carry phosphothreonine. Positions 1480–1527 (TDYSLSPPAKEALASDSQNGQEQGSCPEEGSDIALEDSATDTAVSPGP) are disordered. Ser1485 is subject to Phosphoserine. Residues 1494-1503 (SDSQNGQEQG) are compositionally biased toward polar residues. Residues 1508 to 1518 (EGSDIALEDSA) are compositionally biased toward acidic residues.

As to quaternary structure, interacts with RHOA, GNA13 and SLC1A6. Interacts with GNA12, PLXNB1 and PLXNB2. Interacts (via DH domain) with GCSAM (via C-terminus). Found in a complex with ARHGEF11 and ARHGEF12; binding to ARHGEF11 and ARHGEF12 enhances CDC42 GEF activity of PLEKHG4B, and PLEKHG4B, in turn, inhibits ARHGEF11- and ARHGEF12-mediated RHOA activation. Phosphorylated by MAP kinase p38 (MAPK11, MAPK12, MAPK13 and/or MAPK14). In terms of processing, ubiquitinated by the BCR(KLHL20) E3 ubiquitin ligase complex when previously phosphorylated by MAP kinase p38 (MAPK11, MAPK12, MAPK13 and/or MAPK14), leading to its degradation, thereby restricting RhoA activity and facilitating growth cone spreading and neurite outgrowth.

The protein localises to the cytoplasm. It localises to the membrane. Functionally, may play a role in the regulation of RhoA GTPase by guanine nucleotide-binding alpha-12 (GNA12) and alpha-13 (GNA13). Acts as guanine nucleotide exchange factor (GEF) for RhoA GTPase and may act as GTPase-activating protein (GAP) for GNA12 and GNA13. Involved in neurotrophin-induced neurite outgrowth. In Rattus norvegicus (Rat), this protein is Rho guanine nucleotide exchange factor 11 (Arhgef11).